The chain runs to 391 residues: Phosphoglycerate kinase (391 aa).

Substrate contacts are provided by residues 23–25 (DFN), Arg-38, 61–64 (HLGK), Arg-117, and Arg-150. ATP contacts are provided by residues Lys-201, Gly-291, Glu-322, and 348 to 351 (GGDS).

This sequence belongs to the phosphoglycerate kinase family. Monomer.

It is found in the cytoplasm. The enzyme catalyses (2R)-3-phosphoglycerate + ATP = (2R)-3-phospho-glyceroyl phosphate + ADP. It participates in carbohydrate degradation; glycolysis; pyruvate from D-glyceraldehyde 3-phosphate: step 2/5. The protein is Phosphoglycerate kinase of Clostridium beijerinckii (strain ATCC 51743 / NCIMB 8052) (Clostridium acetobutylicum).